The primary structure comprises 217 residues: Rhicadhesin receptor (217 aa).

Residues 1–20 form the signal peptide; the sequence is MKLIAVLLLVVLATATTATA. The cysteines at positions 30 and 45 are disulfide-linked. N50 and N68 each carry an N-linked (GlcNAc...) asparagine glycan. Residues 58-207 form the Cupin type-1 domain; sequence SNLLVKQGAT…AFQIGTKEVQ (150 aa). 4 residues coordinate Mn(2+): H107, H109, E114, and H153.

The protein belongs to the germin family. Glycosylated.

Its subcellular location is the secreted. It localises to the extracellular space. The protein localises to the apoplast. The protein resides in the cell wall. In terms of biological role, putative receptor for bacterial rhicadhesin, an attachment protein of rhizobiaceae. This Pisum sativum (Garden pea) protein is Rhicadhesin receptor (GER1).